Reading from the N-terminus, the 416-residue chain is Probable histone-binding protein lin-53 (416 aa).

6 WD repeats span residues Asn-118–Lys-158, Gly-170–Gly-210, Gly-220–Ala-260, Ala-263–His-303, Ser-307–Thr-347, and Gly-364–Val-404.

It belongs to the WD repeat RBAP46/RBAP48/MSI1 family. In terms of assembly, binds directly to helix 1 of the histone fold of histone H4, a region that is not accessible when H4 is in chromatin. Probable component of a NuRD-like complex, composed of at least lin-53 and hda-1. Interacts with lin-35. Interacts with hda-1; the interaction is direct. Component of the DRM complex, at least composed of lin-9, lin-35, lin-37, lin-52, lin-53, lin-54- dpl-1 and efl-1. Interacts with hcp-3.

Its subcellular location is the nucleus. It localises to the chromosome. The protein resides in the centromere. In terms of biological role, core histone-binding subunit that may target chromatin assembly factors, chromatin remodeling factors and histone deacetylases to their histone substrates in a manner that is regulated by nucleosomal DNA. Required for hcp-3 and his-1 stabilization, localization of hcp-3 to centromeres and for proper chromosome segregation. Synthetic multivulva class B (synMuvB) protein. SynMuvB proteins are required to repress the induction of vulval development by Ras signaling and probably act by forming the multiprotein DRM complex that represses transcription. This is Probable histone-binding protein lin-53 from Caenorhabditis briggsae.